We begin with the raw amino-acid sequence, 476 residues long: Serine carboxypeptidase 2 (476 aa).

The signal sequence occupies residues 1-34; that stretch reads MRTTTRRLPPAPAAAAVLLAALTCLLLRPAAVAA. Intrachain disulfides connect C97-C353, C254-C266, and C290-C320. 2 N-linked (GlcNAc...) asparagine glycosylation sites follow: N148 and N159. The active site involves S190. N-linked (GlcNAc...) asparagine glycosylation is present at N291. Positions 295-313 are cleaved as a propeptide — linker peptide; sequence SSSSSSLSRRRTRGRYPWL. T314 bears the Blocked amino end (Thr) mark. Residues N341 and N347 are each glycosylated (N-linked (GlcNAc...) asparagine). A glycan (N-linked (GlcNAc...) asparagine; partial) is linked at N352. N352 carries O-linked (GalNAc...) threonine; in variant 351-AT-352 glycosylation. Active-site residues include D390 and H443. N472 is a glycosylation site (N-linked (GlcNAc...) asparagine).

This sequence belongs to the peptidase S10 family. Carboxypeptidase II is a dimer, where each monomer is composed of two chains linked by a disulfide bond.

It is found in the secreted. The catalysed reaction is Preferential release of a C-terminal arginine or lysine residue.. Its function is as follows. May be involved in the degradation of small peptides (2-5 residues) or in the degradation of storage proteins in the embryo. The sequence is that of Serine carboxypeptidase 2 (CBP2) from Hordeum vulgare (Barley).